We begin with the raw amino-acid sequence, 392 residues long: DNA replication and repair protein RecF (392 aa).

30–37 (GPNAAGKT) serves as a coordination point for ATP.

This sequence belongs to the RecF family.

The protein resides in the cytoplasm. In terms of biological role, the RecF protein is involved in DNA metabolism; it is required for DNA replication and normal SOS inducibility. RecF binds preferentially to single-stranded, linear DNA. It also seems to bind ATP. This chain is DNA replication and repair protein RecF, found in Chloroflexus aggregans (strain MD-66 / DSM 9485).